The primary structure comprises 53 residues: Large ribosomal subunit protein bL33 (53 aa).

The protein belongs to the bacterial ribosomal protein bL33 family.

The polypeptide is Large ribosomal subunit protein bL33 (Blochmanniella floridana).